A 654-amino-acid chain; its full sequence is Pyoverdine export ATP-binding/permease protein PvdT (654 aa).

One can recognise an ABC transporter domain in the interval 6-245; it reads IELCDIRKAY…AHKGIQAEEL (240 aa). 43 to 50 contacts ATP; the sequence is GASGSGKS. 4 consecutive transmembrane segments (helical) span residues 282 to 302, 529 to 549, 584 to 604, and 614 to 634; these read ALTLLGIIIGVASVVVMLAVG, LSLMLGAIAAISLLVGGIGVM, AIMLSMVGGLTGIALALVVGA, and AFALPAIVGAFACAVITGVVF.

The protein belongs to the ABC transporter superfamily. Macrolide exporter (TC 3.A.1.122) family. In terms of assembly, part of the tripartite efflux system PvdRT-OpmQ, which is composed of an inner membrane component with both ATPase and permease domains, PvdT, a periplasmic membrane fusion protein, PvdR, and an outer membrane component, OpmQ.

It is found in the cell inner membrane. Its activity is regulated as follows. Has a basal ATPase activity that is stimulated by PvdR. In vitro, interaction with PVD influences the affinity of PvdT to PvdR. In terms of biological role, part of the tripartite efflux system PvdRT-OpmQ required for the secretion into the extracellular milieu of the siderophore pyoverdine (PVD), which is involved in iron acquisition. This subunit binds PVD and drives its secretion by hydrolyzing ATP. The system is responsible for export of newly synthesized PVD after the final steps of biosynthesis have taken place in the periplasm. It is also responsible for recycling of PVD after internalization of ferri-PVD into the periplasm by the outer-membrane receptor FpvA and release of iron from PVD, thus making PVD available for new cycles of iron uptake. Contributes to resistance against ampicillin. In Pseudomonas putida (strain ATCC 47054 / DSM 6125 / CFBP 8728 / NCIMB 11950 / KT2440), this protein is Pyoverdine export ATP-binding/permease protein PvdT.